Here is a 302-residue protein sequence, read N- to C-terminus: Methionyl-tRNA formyltransferase (302 aa).

108–111 (SLLP) is a binding site for (6S)-5,6,7,8-tetrahydrofolate.

The protein belongs to the Fmt family.

The enzyme catalyses L-methionyl-tRNA(fMet) + (6R)-10-formyltetrahydrofolate = N-formyl-L-methionyl-tRNA(fMet) + (6S)-5,6,7,8-tetrahydrofolate + H(+). Its function is as follows. Attaches a formyl group to the free amino group of methionyl-tRNA(fMet). The formyl group appears to play a dual role in the initiator identity of N-formylmethionyl-tRNA by promoting its recognition by IF2 and preventing the misappropriation of this tRNA by the elongation apparatus. This is Methionyl-tRNA formyltransferase from Cereibacter sphaeroides (strain ATCC 17025 / ATH 2.4.3) (Rhodobacter sphaeroides).